The primary structure comprises 491 residues: Cysteine--tRNA ligase (491 aa).

Cys-29 is a Zn(2+) binding site. A 'HIGH' region motif is present at residues 31–41; sequence PTVYDFAHIGN. Residues Cys-227, His-252, and Glu-256 each coordinate Zn(2+). Residues 285 to 289 carry the 'KMSKS' region motif; that stretch reads KMSKS. Lys-288 contacts ATP.

The protein belongs to the class-I aminoacyl-tRNA synthetase family. In terms of assembly, monomer. Zn(2+) is required as a cofactor.

Its subcellular location is the cytoplasm. It catalyses the reaction tRNA(Cys) + L-cysteine + ATP = L-cysteinyl-tRNA(Cys) + AMP + diphosphate. This is Cysteine--tRNA ligase from Rhodopseudomonas palustris (strain TIE-1).